The chain runs to 362 residues: Peptide chain release factor 1 (362 aa).

Glutamine 237 bears the N5-methylglutamine mark.

It belongs to the prokaryotic/mitochondrial release factor family. Methylated by PrmC. Methylation increases the termination efficiency of RF1.

It is found in the cytoplasm. In terms of biological role, peptide chain release factor 1 directs the termination of translation in response to the peptide chain termination codons UAG and UAA. The protein is Peptide chain release factor 1 of Legionella pneumophila (strain Paris).